The sequence spans 281 residues: Beta-lactamase (281 aa).

The first 24 residues, 1–24 (MKKLIFLIVIALVLSACNSNSSHA), serve as a signal peptide directing secretion. Catalysis depends on Ser-63, which acts as the Acyl-ester intermediate. Substrate is bound at residue 225 to 227 (KSG).

It belongs to the class-A beta-lactamase family.

The catalysed reaction is a beta-lactam + H2O = a substituted beta-amino acid. This Staphylococcus aureus protein is Beta-lactamase (blaZ).